A 189-amino-acid chain; its full sequence is Chitin synthase 2 (189 aa).

This sequence belongs to the chitin synthase family. Class II subfamily.

The protein resides in the cell membrane. It carries out the reaction [(1-&gt;4)-N-acetyl-beta-D-glucosaminyl](n) + UDP-N-acetyl-alpha-D-glucosamine = [(1-&gt;4)-N-acetyl-beta-D-glucosaminyl](n+1) + UDP + H(+). In terms of biological role, polymerizes chitin, a structural polymer of the cell wall and septum, by transferring the sugar moiety of UDP-GlcNAc to the non-reducing end of the growing chitin polymer. This chain is Chitin synthase 2 (CHS2), found in Xylohypha bantiana.